The primary structure comprises 398 residues: Elongation factor Tu (398 aa).

The tr-type G domain occupies 10–208 (KPHVNVGTIG…ALDDYIPEPE (199 aa)). The segment at 19 to 26 (GHVDHGKT) is G1. A GTP-binding site is contributed by 19–26 (GHVDHGKT). T26 is a binding site for Mg(2+). The G2 stretch occupies residues 61–65 (GITIA). The segment at 82–85 (DCPG) is G3. GTP-binding positions include 82–86 (DCPGH) and 137–140 (NKAD). The G4 stretch occupies residues 137–140 (NKAD). The tract at residues 175-177 (SAL) is G5.

The protein belongs to the TRAFAC class translation factor GTPase superfamily. Classic translation factor GTPase family. EF-Tu/EF-1A subfamily. In terms of assembly, monomer.

Its subcellular location is the cytoplasm. It carries out the reaction GTP + H2O = GDP + phosphate + H(+). Functionally, GTP hydrolase that promotes the GTP-dependent binding of aminoacyl-tRNA to the A-site of ribosomes during protein biosynthesis. The polypeptide is Elongation factor Tu (Marinobacter nauticus (strain ATCC 700491 / DSM 11845 / VT8) (Marinobacter aquaeolei)).